The chain runs to 52 residues: uncharacterized protein (52 aa).

This is an uncharacterized protein from Dictyostelium discoideum (Social amoeba).